The chain runs to 326 residues: MHRTTRIKITELNPHLMCVLCGGYFIDATTIIECLHSFCKTCIVRYLETSKYCPICDVQVHKTRPLLNIRSDKTLQDIVYKLVPGLFKNEMKRRRDFYAAHPSADAANGSNEDRGEVADEDKRIITDDEIISLSIEFFDQNRLERKGNKEKEKSKEEVNDKRYLRCPAAMTVMHLRKFLRSKMDIPNTFQIDVMYEEEPLKDYYTLMDIAYIYTWRRNGPLPLKYRVRPTCKRMKIGHQREGLSNSGELESDSGSDKASSPAGGLPSTSSCLPSPSTPVQSPHPQFPHISSTMNGTSSSPGSNHQSSFTNRARKSSINGSSATSSG.

The RING-type zinc-finger motif lies at 18–57; that stretch reads CVLCGGYFIDATTIIECLHSFCKTCIVRYLETSKYCPICD. The Nuclear localization signal motif lies at 81–95; sequence KLVPGLFKNEMKRRR. The interaction with PHC2 stretch occupies residues 162–182; that stretch reads RYLRCPAAMTVMHLRKFLRSK. The interval 164–228 is interaction with E4F1; the sequence is LRCPAAMTVM…GPLPLKYRVR (65 aa). Residues 236-326 form a disordered region; that stretch reads IGHQREGLSN…INGSSATSSG (91 aa). Low complexity predominate over residues 265 to 278; it reads LPSTSSCLPSPSTP. Over residues 279-310 the composition is skewed to polar residues; it reads VQSPHPQFPHISSTMNGTSSSPGSNHQSSFTN. Residues 315–326 show a composition bias toward low complexity; the sequence is SSINGSSATSSG.

In terms of assembly, component of a PRC1-like complex.

The protein localises to the nucleus. It is found in the cytoplasm. Its function is as follows. Component of a Polycomb group (PcG) multiprotein PRC1-like complex, a complex class required to maintain the transcriptionally repressive state of many genes, including Hox genes, throughout development. PcG PRC1 complex acts via chromatin remodeling and modification of histones; it mediates monoubiquitination of histone H2A 'Lys-119', rendering chromatin heritably changed in its expressibility. In the PRC1-like complex, regulates the E3 ubiquitin-protein ligase activity of RNF2/RING2. The protein is Polycomb complex protein BMI-1 (BMI1) of Gallus gallus (Chicken).